The chain runs to 77 residues: uncharacterized protein (77 aa).

2 disordered regions span residues 1-34 (MSRA…TKMN) and 56-77 (LDGD…FSGR). A compositionally biased stretch (basic and acidic residues) spans 8–20 (DNDKGWAKKKGAD). Residues 25–34 (PRPHKQTKMN) are compositionally biased toward basic residues. Residues 56 to 70 (LDGDIRRGGNKKSER) show a composition bias toward basic and acidic residues.

This is an uncharacterized protein from Dictyostelium discoideum (Social amoeba).